The following is a 348-amino-acid chain: Hereditary hemochromatosis protein homolog (348 aa).

A signal peptide spans 1–22; sequence MGPRARPALFFLILLRTVAAQG. The alpha-1 stretch occupies residues 23-114; sequence RPPRSHSLRY…IMDNHNHSKE (92 aa). Residues 23 to 306 are Extracellular-facing; it reads RPPRSHSLRY…WEPSLSNTLV (284 aa). Residues Asn-110, Asn-130, and Asn-234 are each glycosylated (N-linked (GlcNAc...) asparagine). Residues 115–205 form an alpha-2 region; the sequence is SHTLQVILGC…ELGRGVLDQQ (91 aa). Intrachain disulfides connect Cys-124–Cys-187 and Cys-225–Cys-282. The interval 206–297 is alpha-3; it reads VPPLVKVTHH…GLDQPLTATW (92 aa). Residues 207-296 form the Ig-like C1-type domain; it reads PPLVKVTHHV…PGLDQPLTAT (90 aa). Positions 298–306 are connecting peptide; sequence EPSLSNTLV. A helical membrane pass occupies residues 307-330; it reads TGVISGIAVCVIIFFIGILFRILR. Topologically, residues 331–348 are cytoplasmic; it reads KRQASRGAMGDYVLGECE.

The protein belongs to the MHC class I family. As to quaternary structure, binds TFR through the extracellular domain in a pH-dependent manner.

The protein localises to the cell membrane. Functionally, binds to transferrin receptor (TFR) and reduces its affinity for iron-loaded transferrin. The protein is Hereditary hemochromatosis protein homolog (HFE) of Ceratotherium simum (White rhinoceros).